Reading from the N-terminus, the 405-residue chain is Cystathionine gamma-lyase (405 aa).

The substrate site is built by R62, Y114, and R119. Position 212 is an N6-(pyridoxal phosphate)lysine (K212). E339 lines the substrate pocket.

The protein belongs to the trans-sulfuration enzymes family. Homotetramer. Interacts with CALM in a calcium-dependent manner. Requires pyridoxal 5'-phosphate as cofactor. In terms of tissue distribution, highly expressed in liver. Also in muscle and lower expression in most tissues except heart, pituitary gland, spleen, thymus, and vascular tissue, where it is hardly detected.

It localises to the cytoplasm. The catalysed reaction is L,L-cystathionine + H2O = 2-oxobutanoate + L-cysteine + NH4(+). It catalyses the reaction L-cysteine + H2O = hydrogen sulfide + pyruvate + NH4(+) + H(+). The enzyme catalyses L-homocysteine + H2O = 2-oxobutanoate + hydrogen sulfide + NH4(+) + H(+). It carries out the reaction L-homoserine = 2-oxobutanoate + NH4(+). The catalysed reaction is L-selenocystathionine + H2O = L-selenocysteine + 2-oxobutanoate + NH4(+). The protein operates within amino-acid biosynthesis; L-cysteine biosynthesis; L-cysteine from L-homocysteine and L-serine: step 2/2. Inhibited by propargylglycine, trifluoroalanine and aminoethoxyvinylglycine. Catalyzes the last step in the trans-sulfuration pathway from L-methionine to L-cysteine in a pyridoxal-5'-phosphate (PLP)-dependent manner, which consists on cleaving the L,L-cystathionine molecule into L-cysteine, ammonia and 2-oxobutanoate. Part of the L-cysteine derived from the trans-sulfuration pathway is utilized for biosynthesis of the ubiquitous antioxidant glutathione. Besides its role in the conversion of L-cystathionine into L-cysteine, it utilizes L-cysteine and L-homocysteine as substrates (at much lower rates than L,L-cystathionine) to produce the endogenous gaseous signaling molecule hydrogen sulfide (H2S). In vitro, it converts two L-cysteine molecules into lanthionine and H2S, also two L-homocysteine molecules to homolanthionine and H2S, which can be particularly relevant under conditions of severe hyperhomocysteinemia (which is a risk factor for cardiovascular disease, diabetes, and Alzheimer's disease). Lanthionine and homolanthionine are structural homologs of L,L-cystathionine that differ by the absence or presence of an extra methylene group, respectively. Acts as a cysteine-protein sulfhydrase by mediating sulfhydration of target proteins: sulfhydration consists of converting -SH groups into -SSH on specific cysteine residues of target proteins such as GAPDH, PTPN1 and NF-kappa-B subunit RELA, thereby regulating their function. By generating the gasotransmitter H2S, it participates in a number of physiological processes such as vasodilation, bone protection, and inflammation. Plays an essential role in myogenesis by contributing to the biogenesis of H2S in skeletal muscle tissue. Can also accept homoserine as substrate. Catalyzes the elimination of selenocystathionine (which can be derived from the diet) to yield selenocysteine, ammonia and 2-oxobutanoate. This Homo sapiens (Human) protein is Cystathionine gamma-lyase (CTH).